A 377-amino-acid chain; its full sequence is UPF0754 membrane protein RBAM_010020 (377 aa).

2 helical membrane passes run 1 to 21 (MGIA…GAVT) and 357 to 377 (YLGG…VILF).

The protein belongs to the UPF0754 family.

Its subcellular location is the cell membrane. This Bacillus velezensis (strain DSM 23117 / BGSC 10A6 / LMG 26770 / FZB42) (Bacillus amyloliquefaciens subsp. plantarum) protein is UPF0754 membrane protein RBAM_010020.